A 500-amino-acid polypeptide reads, in one-letter code: Perfringolysin O (500 aa).

Positions 1-28 (MIRFKKTKLIASIAMALCLFSQPVISFS) are cleaved as a signal peptide. 4 beta stranded membrane passes run 189-202 (KSQISSALNVNAKV), 209-218 (VDFNAVANNE), 287-296 (SKDVQAAFKA), and 304-316 (KNSQQYKDIYENS). A Conserved undecapeptide motif is present at residues 458 to 468 (ECTGLAWEWWR). The Cholesterol binding signature appears at 490–491 (TL).

It belongs to the cholesterol-dependent cytolysin family. In terms of assembly, homooligomeric pore complex of 35 to 50 subunits; when inserted in the host membrane.

It is found in the secreted. The protein localises to the host cell membrane. In terms of biological role, a cholesterol-dependent toxin that causes cytolysis by forming pores in cholesterol containing host membranes. After binding to target membranes, the protein assembles into a pre-pore complex. A conformation change leads to insertion in the host membrane and formation of an oligomeric pore complex. Cholesterol is required for binding to host cell membranes, membrane insertion and pore formation; cholesterol binding is mediated by a Thr-Leu pair in the C-terminus. Can be reversibly inactivated by oxidation. This is Perfringolysin O (pfo) from Clostridium perfringens (strain ATCC 13124 / DSM 756 / JCM 1290 / NCIMB 6125 / NCTC 8237 / Type A).